Here is a 261-residue protein sequence, read N- to C-terminus: Short-chain dehydrogenase/reductase ARMGADRAFT_1018421 (261 aa).

Residues Ile21, Asp68, Asn95, Lys128, Tyr161, Lys165, Val194, and Thr196 each coordinate NADP(+). Tyr161 acts as the Proton acceptor in catalysis. Lys165 acts as the Lowers pKa of active site Tyr in catalysis.

It belongs to the short-chain dehydrogenases/reductases (SDR) family.

The protein operates within secondary metabolite biosynthesis. Short-chain dehydrogenase/reductase, part of the gene cluster that mediates the biosynthesis of melleolides, a range of antifungal and phytotoxic polyketide derivatives composed of an orsellinic acid (OA) moiety esterified to various sesquiterpene alcohols. The first step in melleolides biosynthesis is performed by the delta(6)-protoilludene synthase PRO1 which catalyzes the cyclization of farnesyl diphosphate to protoilludene. The orsellinic acid synthase armB produces OA by condensing acetyl-CoA with 3 malonyl-CoA units in a three-round chain elongation reaction folowed by a C2-C7 ring closure. ArmB further catalyzes the trans-esterification of OA to the various sesquiterpene alcohols resulting from the hydroxylation of protoilludene. The melleolides cluster also includes 5 cytochrome P450 monooxygenases, 4 NAD(+)-dependent oxidoreductases, one flavin-dependent oxidoreductase, and one O-methyltransferase. The cytochrome P450 monooxygenases may be involved in protoilludene hydroxylation to elaborate melleolides with multiple alcohol groups, such as melleolide D, which carries alcohol functionalities at C-4, C-5, C-10, and C-13. The role of the NAD(+)-dependent enzymes remains unknown. Numerous melleolides, including arnamial, show 5'-O-methylation of the aromatic moiety which may be catalyzed by the methyltransferase encoded in the cluster. The flavin-dependent oxidoreductase might represent the dehydrogenase yielding the aldehyde in position 1 of arnamial and other melleolides. Finally, several halogenase localized outside of the cluster, are able to catalyze the transfer of a single chlorine atom to the melleolide backbone, resulting in a 6'-chloromelleolide product. The polypeptide is Short-chain dehydrogenase/reductase ARMGADRAFT_1018421 (Armillaria gallica (Bulbous honey fungus)).